The primary structure comprises 553 residues: CTP synthase (553 aa).

The interval 1 to 270 (MTKYVFVTGG…DRLICEELRL (270 aa)) is amidoligase domain. Serine 13 serves as a coordination point for CTP. Serine 13 contacts UTP. ATP-binding positions include 14-19 (SLGKGI) and aspartate 71. The Mg(2+) site is built by aspartate 71 and glutamate 144. CTP is bound by residues 151–153 (DIE), 191–196 (KTKPTQ), and lysine 227. UTP contacts are provided by residues 191-196 (KTKPTQ) and lysine 227. The region spanning 295–547 (TIGMVGKYVD…VQAALACQQT (253 aa)) is the Glutamine amidotransferase type-1 domain. Glycine 356 lines the L-glutamine pocket. Cysteine 383 serves as the catalytic Nucleophile; for glutamine hydrolysis. Residues 384 to 387 (LGMQ), glutamate 407, and arginine 473 contribute to the L-glutamine site. Residues histidine 520 and glutamate 522 contribute to the active site.

Belongs to the CTP synthase family. Homotetramer.

It carries out the reaction UTP + L-glutamine + ATP + H2O = CTP + L-glutamate + ADP + phosphate + 2 H(+). The enzyme catalyses L-glutamine + H2O = L-glutamate + NH4(+). The catalysed reaction is UTP + NH4(+) + ATP = CTP + ADP + phosphate + 2 H(+). It functions in the pathway pyrimidine metabolism; CTP biosynthesis via de novo pathway; CTP from UDP: step 2/2. With respect to regulation, allosterically activated by GTP, when glutamine is the substrate; GTP has no effect on the reaction when ammonia is the substrate. The allosteric effector GTP functions by stabilizing the protein conformation that binds the tetrahedral intermediate(s) formed during glutamine hydrolysis. Inhibited by the product CTP, via allosteric rather than competitive inhibition. In terms of biological role, catalyzes the ATP-dependent amination of UTP to CTP with either L-glutamine or ammonia as the source of nitrogen. Regulates intracellular CTP levels through interactions with the four ribonucleotide triphosphates. The sequence is that of CTP synthase from Burkholderia mallei (strain NCTC 10247).